Consider the following 108-residue polypeptide: Small ribosomal subunit protein bS16 (108 aa).

Residues 82-108 (ESKFSKNTQTENKKPVSKKTTKKSKDN) are disordered. Residues 96–108 (PVSKKTTKKSKDN) show a composition bias toward basic residues.

This sequence belongs to the bacterial ribosomal protein bS16 family.

The protein is Small ribosomal subunit protein bS16 of Mycoplasma mycoides subsp. mycoides SC (strain CCUG 32753 / NCTC 10114 / PG1).